We begin with the raw amino-acid sequence, 405 residues long: CMP-sialic acid transporter 5 (405 aa).

Topologically, residues 1–43 (MQRNGVVECSVCRSRLVVPSPRSVSRAYDKHRSKISSKFRALN) are cytoplasmic. The chain crosses the membrane as a helical span at residues 44–64 (VLLVVGDCILVGLQPILVFMS). Over 65 to 74 (KVDGKFQFSP) the chain is Lumenal. A helical membrane pass occupies residues 75 to 95 (ISVNFLTEVTKVVFAIVMLII). Residues 96–121 (QSRKQKVGEKPLLARSTFIQAARNNA) are Cytoplasmic-facing. A helical membrane pass occupies residues 122–142 (LLAVPALLYAINNYLKFIMQL). The Lumenal portion of the chain corresponds to 143 to 147 (YFNPS). A helical membrane pass occupies residues 148–168 (TVKMLSNLKVLVIAVLLKFIM). Residues 169 to 171 (KRR) lie on the Cytoplasmic side of the membrane. Residues 172–192 (FSVIQWEALALLLIGISINQL) traverse the membrane as a helical segment. Over 193–200 (RTVPAGNT) the chain is Lumenal. Residues 201–221 (AFGLPVTAIAYIYTLIFVTVP) traverse the membrane as a helical segment. At 222 to 244 (SLASVYNEYALKSQYDTSIYLQN) the chain is on the cytoplasmic side. A helical membrane pass occupies residues 245 to 265 (LFLYGYGAIFNFLGILGTALF). The Lumenal segment spans residues 266 to 281 (QGPESFNILRGHSRAT). Residues 282–302 (MFLICNNAAQGILSSFFFKYA) form a helical membrane-spanning segment. Residues 303 to 322 (DTILKKYSSTVATIFTGLAS) are Cytoplasmic-facing. Residues 323-343 (AAFLGHTLTINFLLGISVVFI) traverse the membrane as a helical segment. The Lumenal portion of the chain corresponds to 344–405 (SMHQFFSPLA…TDERQPLLPT (62 aa)). A disordered region spans residues 368–405 (DTQNHRSSESSFVNMTAGAAEDASHRIGTDERQPLLPT). The segment covering 389-405 (DASHRIGTDERQPLLPT) has biased composition (basic and acidic residues).

Belongs to the nucleotide-sugar transporter family. CMP-Sialate:CMP antiporter (TC 2.A.7.12) subfamily.

The protein localises to the golgi apparatus membrane. Sugar transporter involved in the transport of CMP-sialic acid from the cytoplasm into the Golgi. May transport important nucleotide sugars such as CMP-Kdo (2-keto-3-deoxy-D-manno-octulosonic acid) in physiological conditions. The protein is CMP-sialic acid transporter 5 of Oryza sativa subsp. japonica (Rice).